Consider the following 3550-residue polypeptide: Zinc finger homeobox protein 4 (3550 aa).

M1 is subject to N-acetylmethionine. Disordered regions lie at residues 1-54, 426-479, and 521-614; these read METC…LKTD, HLSS…AYSN, and TSSS…IECP. The span at 9–20 shows a compositional bias: polar residues; it reads ISRQENGQSTSK. 2 stretches are compositionally biased toward basic and acidic residues: residues 39–54 and 433–451; these read EPDR…LKTD and KMSE…KEST. The span at 467–479 shows a compositional bias: acidic residues; sequence EPGDEDEEDAYSN. Polar residues-rich tracts occupy residues 542 to 553 and 566 to 576; these read GRSNGNVTNSYS and RDGTTAAPSET. C2H2-type zinc fingers lie at residues 611–634, 642–665, and 697–721; these read IECP…TMMH, LKCP…KEKH, and FRCE…SDKH. Positions 739 to 763 are disordered; it reads HSAPTPNTSLSGCGTPSPSKPKQKP. Residues 742–752 show a composition bias toward polar residues; it reads PTPNTSLSGCG. C2H2-type zinc fingers lie at residues 765 to 787, 915 to 939, 971 to 993, and 1019 to 1043; these read RRCE…MTSE, YQCK…TDKH, LKCN…TTNH, and YYCA…SVKH. The tract at residues 1100–1142 is disordered; sequence KAASEEPSEDAGDPLKPPTVAEDDEKEAHKRDNSEGKISTKDP. Over residues 1125 to 1142 the composition is skewed to basic and acidic residues; it reads KEAHKRDNSEGKISTKDP. K1165 participates in a covalent cross-link: Glycyl lysine isopeptide (Lys-Gly) (interchain with G-Cter in SUMO2). 2 C2H2-type zinc fingers span residues 1188-1211 and 1217-1240; these read YQYP…LSQH and ICCP…THLH. The interval 1271 to 1339 is disordered; sequence APEKSEQDPP…EWNKTSSKDV (69 aa). Residues 1297-1326 show a composition bias toward basic and acidic residues; that stretch reads VDDKSMSGLEDSKVGVEIKNEEQKPAKEPV. Residue K1315 forms a Glycyl lysine isopeptide (Lys-Gly) (interchain with G-Cter in SUMO2) linkage. 2 consecutive C2H2-type zinc fingers follow at residues 1368 to 1390 and 1396 to 1419; these read YRCN…SQYH and TMCT…EAGH. Positions 1467-1492 are disordered; sequence EGKASPVESDGSSIPDDLGLEPKRTL. Residues 1512–1538 form a C2H2-type 12 zinc finger; that stretch reads YKCTVCKESFTQKNILLVHYNSVSHLH. K1562 participates in a covalent cross-link: Glycyl lysine isopeptide (Lys-Gly) (interchain with G-Cter in SUMO2). The C2H2-type 13 zinc-finger motif lies at 1564 to 1588; that stretch reads YKCSTCSVAYSQSSTLEIHMRSVLH. Positions 1779–1873 are disordered; sequence PQLQPQNQQP…CIPPPRIASG (95 aa). Residues 1792–1808 show a composition bias toward low complexity; that stretch reads QQQQPQQQPSKLLKQEQ. A Glycyl lysine isopeptide (Lys-Gly) (interchain with G-Cter in SUMO2) cross-link involves residue K1805. Positions 1823 to 1860 are enriched in basic and acidic residues; the sequence is PSYKEAEEVTEKQEKPKQEFINDTEGLKDSKDIKKQKS. Residues 1916–1939 form a C2H2-type 14 zinc finger; sequence LECGICGKLFSNVLILKSHQEHVH. A disordered region spans residues 1984-2006; it reads KIPNTVSAPLQAPPPTPPSAPQQ. Residues 1994 to 2003 show a composition bias toward pro residues; the sequence is QAPPPTPPSA. 2 DNA-binding regions (homeobox) span residues 2069–2128 and 2166–2225; these read FKRP…RQRN and KRSS…RKSY. A C2H2-type 15; degenerate zinc finger spans residues 2252–2276; sequence YQCKKCNVVFPRIFDLITHQKKQCY. The span at 2318–2331 shows a compositional bias: polar residues; that stretch reads TLVASSGSGTSTPL. Positions 2318-2412 are disordered; the sequence is TLVASSGSGT…SQTPIPSSPL (95 aa). Basic and acidic residues predominate over residues 2337 to 2355; that stretch reads PEPEKNSPKTEYPGEKTKQ. Polar residues predominate over residues 2356-2376; sequence SDPSLPQGTKSAPSSVLTSSE. Residues 2383 to 2392 show a composition bias toward pro residues; sequence PQPPTQPPKQ. Residues 2401 to 2412 show a composition bias toward polar residues; the sequence is SASQTPIPSSPL. A C2H2-type 16 zinc finger spans residues 2430 to 2452; that stretch reads YPCDQCTLAFPTLELWKEHQHMH. Over residues 2490–2508 the composition is skewed to polar residues; it reads GSSLTQMPPQTSTAHTTAP. The disordered stretch occupies residues 2490–2545; that stretch reads GSSLTQMPPQTSTAHTTAPASVAASLKRKLEDKEDNNCSEKEGGNSGEDQHRDKRL. Residues 2517 to 2541 are compositionally biased toward basic and acidic residues; that stretch reads RKLEDKEDNNCSEKEGGNSGEDQHR. The homeobox 3 DNA-binding region spans 2542-2601; it reads DKRLRTTITPEQLEILYEKYLLDSNPTRKMLDHIAREVGLKKRVVQVWFQNTRARERKGQ. Residues 2612 to 2635 form a C2H2-type 17 zinc finger; it reads KRCPFCRALFKAKSALESHIRSRH. S2645 bears the Phosphoserine mark. Disordered stretches follow at residues 2746–2791 and 2810–2866; these read AISD…ATTP and HFND…PGHK. Polar residues predominate over residues 2781-2791; the sequence is LDSLQKPATTP. Residues 2811 to 2820 are compositionally biased toward basic and acidic residues; it reads FNDKDGDHDQ. The segment covering 2843 to 2855 has biased composition (low complexity); the sequence is PSSPNPFGSSNPF. The homeobox 4 DNA-binding region spans 2865 to 2924; that stretch reads HKRFRTQMSNLQLKVLKACFSDYRTPTMQECEMLGNEIGLPKRVVQVWFQNARAKERKFK. The C2H2-type 18 zinc-finger motif lies at 2943 to 2967; it reads PECTLCGVKYSARLSIRDHIFSKQH. Disordered stretches follow at residues 3051–3156 and 3261–3318; these read PSSL…EEKI and QDSL…VQLD. Residues 3058–3068 are compositionally biased toward polar residues; that stretch reads PQNSNTLTSPG. Over residues 3075–3088 the composition is skewed to low complexity; sequence PSSATSSPALSLSS. A compositionally biased stretch (pro residues) spans 3097–3109; sequence TPPPPPPPPPPPS. Basic and acidic residues predominate over residues 3136–3156; sequence IKEEESEAIKPEKHPKKEEKI. Residue K3137 forms a Glycyl lysine isopeptide (Lys-Gly) (interchain with G-Cter in SUMO2) linkage. A coiled-coil region spans residues 3248-3277; it reads ALLQQYQQYQQSLQDSLQKQQKQQQEQQQK. A compositionally biased stretch (low complexity) spans 3261 to 3276; that stretch reads QDSLQKQQKQQQEQQQ. Residues 3298–3318 show a composition bias toward basic and acidic residues; that stretch reads SETKEEKSTAPESTKEEVQLD. A C2H2-type 19; degenerate zinc finger spans residues 3337–3361; that stretch reads FVCRKCQMMFTDEDATVNHQKSFCY. Residues 3381–3405 form a C2H2-type 20 zinc finger; that stretch reads YQCLACDLALSGNEALSQHLQSSLH. Residues 3424–3445 are disordered; it reads LPHSVCSPPPNTSSTSPSAASS. Over residues 3435–3445 the composition is skewed to low complexity; sequence TSSTSPSAASS.

The protein belongs to the krueppel C2H2-type zinc-finger protein family. In terms of tissue distribution, expressed in brain, heart, lung, muscle and small intestine. No expression detected in undifferentiated P19 cells, however, expression was seen following retinoic acid treatment to induce neuronal differentiation. Expressed in undifferentiated C2C12 cells, following induction of muscle differentiation in a low-serum medium, expression levels were decreased.

It localises to the nucleus. Its function is as follows. May play a role in neural and muscle differentiation. May be involved in transcriptional regulation. This is Zinc finger homeobox protein 4 (Zfhx4) from Mus musculus (Mouse).